The following is a 460-amino-acid chain: Serine hydroxymethyltransferase, cytosolic (460 aa).

Position 244 is an N6-(pyridoxal phosphate)lysine (Lys-244).

Belongs to the SHMT family. In terms of assembly, homotetramer. Pyridoxal 5'-phosphate is required as a cofactor.

It localises to the cytoplasm. It carries out the reaction (6R)-5,10-methylene-5,6,7,8-tetrahydrofolate + glycine + H2O = (6S)-5,6,7,8-tetrahydrofolate + L-serine. The protein operates within one-carbon metabolism; tetrahydrofolate interconversion. Interconversion of serine and glycine. The polypeptide is Serine hydroxymethyltransferase, cytosolic (SHMT-1) (Encephalitozoon cuniculi (strain GB-M1) (Microsporidian parasite)).